Reading from the N-terminus, the 424-residue chain is Carbohydrate sulfotransferase 8 (424 aa).

The Cytoplasmic segment spans residues 1-10; it reads MTLRPGTMRL. Residues 11–31 form a helical; Signal-anchor for type II membrane protein membrane-spanning segment; sequence ACMFSSILLFGAAGLLLFISL. At 32-424 the chain is on the lumenal side; it reads QDPTELAPQQ…NYSKPFADLY (393 aa). The segment at 47–107 is disordered; it reads FNIRPRQPHH…PLQRGTRLRL (61 aa). The segment covering 66 to 77 has biased composition (basic and acidic residues); it reads GDLKEPTERVTR. N128 is a glycosylation site (N-linked (GlcNAc...) asparagine). 3'-phosphoadenylyl sulfate contacts are provided by residues 198–204 and 258–266; these read PKAGCSN and REPFERLVS. Residues N294, N367, and N415 are each glycosylated (N-linked (GlcNAc...) asparagine).

It belongs to the sulfotransferase 2 family. Predominantly expressed in pituitary gland. In brain, it is expressed in pituitary gland, cerebellum, medulla oblongata, pons, thalamus and spinal cord. Expressed in the epidermis. Expressed at lower level in lung, spleen, adrenal gland, placenta, prostate, testis, mammary gland and trachea.

It is found in the golgi apparatus membrane. Functionally, catalyzes the transfer of sulfate to position 4 of non-reducing N-acetylgalactosamine (GalNAc) residues in both N-glycans and O-glycans. Required for biosynthesis of glycoprotein hormones lutropin and thyrotropin, by mediating sulfation of their carbohydrate structures. Only active against terminal GalNAcbeta1,GalNAcbeta. Not active toward chondroitin. This Homo sapiens (Human) protein is Carbohydrate sulfotransferase 8 (CHST8).